A 165-amino-acid polypeptide reads, in one-letter code: Secreted acidic protein 2 (165 aa).

Acidic residues-rich tracts occupy residues 1–58 (WSXS…DDSG) and 80–102 (ESSD…DAYN). The tract at residues 1–112 (WSXSGDDDDD…DDSQAGELNS (112 aa)) is disordered. The span at 103-112 (DDSQAGELNS) shows a compositional bias: polar residues.

As to expression, component of the acid-insoluble and acid-soluble organic matrix of the aragonitic skeleton (at protein level).

The protein resides in the secreted. This is Secreted acidic protein 2 from Acropora millepora (Staghorn coral).